The following is a 250-amino-acid chain: Oil body-associated protein 2B (250 aa).

The tract at residues 1–29 (MSSSDQNPAATPASSGPAEPSPPGRPTAV) is disordered. Low complexity predominate over residues 8–18 (PAATPASSGPA).

It belongs to the OBAP family.

This is Oil body-associated protein 2B from Zea mays (Maize).